A 349-amino-acid chain; its full sequence is Phosphoribosylformylglycinamidine cyclo-ligase (349 aa).

This sequence belongs to the AIR synthase family.

The protein resides in the cytoplasm. It catalyses the reaction 2-formamido-N(1)-(5-O-phospho-beta-D-ribosyl)acetamidine + ATP = 5-amino-1-(5-phospho-beta-D-ribosyl)imidazole + ADP + phosphate + H(+). The protein operates within purine metabolism; IMP biosynthesis via de novo pathway; 5-amino-1-(5-phospho-D-ribosyl)imidazole from N(2)-formyl-N(1)-(5-phospho-D-ribosyl)glycinamide: step 2/2. The sequence is that of Phosphoribosylformylglycinamidine cyclo-ligase from Jannaschia sp. (strain CCS1).